Here is a 568-residue protein sequence, read N- to C-terminus: NADPH oxidase 3 (568 aa).

The Cytoplasmic segment spans residues 1 to 13 (MMGCWILNEGLST). The chain crosses the membrane as a helical span at residues 14 to 34 (ILVLSWLGINFYLFIDTFYWY). Residues 35–51 (EEEESFHYTRVILGSTL) lie on the Extracellular side of the membrane. A helical transmembrane segment spans residues 52 to 72 (AWARASALCLNFNCMLILIPV). The 230-residue stretch at 55 to 284 (RASALCLNFN…VVLYACERII (230 aa)) folds into the Ferric oxidoreductase domain. Topologically, residues 73-103 (SRNLISFIRGTSICCRGPWRRQLDKNLRFHK) are cytoplasmic. Residues 104-124 (LVAYGIAVNATIHIVAHFFNL) traverse the membrane as a helical segment. The Extracellular segment spans residues 125–167 (ERYHWSQSEEAQGLLAALSKLGNTPNESYLNPVRTFPTNTTTE). Asn-163 carries an N-linked (GlcNAc...) asparagine glycan. A helical membrane pass occupies residues 168-188 (LLRTIAGVTGLVISLALVLIM). Topologically, residues 189-201 (TSSTEFIRQASYE) are cytoplasmic. The helical transmembrane segment at 202–222 (LFWYTHHVFIVFFLSLAIHGT) threads the bilayer. The Extracellular portion of the chain corresponds to 223–395 (GRIVRGQTQD…DGPFGTALTD (173 aa)). An N-linked (GlcNAc...) asparagine glycan is attached at Asn-238. The region spanning 285 to 395 (RFWRFQQEVV…DGPFGTALTD (111 aa)) is the FAD-binding FR-type domain. A helical membrane pass occupies residues 396 to 416 (VFHYPVCVCVAAGIGVTPFAA). Topologically, residues 417–568 (LLKSIWYKCS…VHFYYNKESF (152 aa)) are cytoplasmic.

As to quaternary structure, interacts with CYBA/p22phox. Heterodimerization with CYBA/p22phox is essential for its activity and cell membrane localization. It depends on heme as a cofactor. Post-translationally, N-glycosylated in a CYBA/p22phox-dependent manner.

The protein localises to the cell membrane. The catalysed reaction is NADPH + 2 O2 = 2 superoxide + NADP(+) + H(+). With respect to regulation, activated by the ototoxic drug cisplatin. Activated by NOXO1. Cooperatively activated by NCF1 and NCF2 or NOXA1 in a phorbol 12-myristate 13-acetate (PMA)-dependent manner. Inhibited by diphenyleneiodonium chloride. NADPH oxidase that catalyzes the generation of superoxide from molecular oxygen utilizing NADPH as an electron donor, upon formation of a complex with CYBA/p22phox. Plays a role in the biogenesis of otoconia/otolith, which are crystalline structures of the inner ear involved in the perception of gravity. This chain is NADPH oxidase 3 (NOX3), found in Homo sapiens (Human).